The following is a 314-amino-acid chain: Oxalate oxidoreductase subunit beta (314 aa).

Positions 24, 27, 52, and 225 each coordinate [4Fe-4S] cluster.

Dimer of heterotrimer of one alpha, one beta and one delta subunit. Requires [4Fe-4S] cluster as cofactor.

It carries out the reaction oxidized 2[4Fe-4S]-[ferredoxin] + oxalate = reduced 2[4Fe-4S]-[ferredoxin] + 2 CO2. In terms of biological role, catalyzes the anaerobic oxidation of oxalate using a broad range of electron acceptors, including ferredoxin and the nickel-dependent carbon monoxide dehydrogenase. Does not require coenzyme A as cosubstrate. Enables anaerobic growth on oxalate which is used as energy source by the bacteria. The polypeptide is Oxalate oxidoreductase subunit beta (Moorella thermoacetica (strain ATCC 39073 / JCM 9320)).